Consider the following 312-residue polypeptide: Olfactory receptor 52A1 (312 aa).

Residues 1 to 27 (MSISNITVYMPSVLTLVGIPGLESVQC) lie on the Extracellular side of the membrane. Residue asparagine 5 is glycosylated (N-linked (GlcNAc...) asparagine). A helical membrane pass occupies residues 28–48 (WIGIPFCAIYLIAMIGNSLLL). At 49-56 (SIIKSERS) the chain is on the cytoplasmic side. Residues 57-77 (LHEPLYIFLGMLGATDIALAS) traverse the membrane as a helical segment. The Extracellular segment spans residues 78–101 (SIMPKMLGIFWFNVPEIYFDSCLL). A disulfide bridge connects residues cysteine 99 and cysteine 182. A helical transmembrane segment spans residues 102-122 (QMWFIHTLQGIESGILVAMAL). The Cytoplasmic portion of the chain corresponds to 123–141 (DRYVAICYPLRHANIFTHQ). Residues 142–162 (LVIQIGTMVVLRAAILVAPCL) traverse the membrane as a helical segment. The Extracellular segment spans residues 163–199 (VLIKCRFQFYHTTVISHSYCEHMAIVKLAAANVQVNK). A helical membrane pass occupies residues 200–220 (IYGLFVAFTVAGFDLTFITLS). At 221–240 (YIQIFITVFRLPQKEARFKA) the chain is on the cytoplasmic side. Residues 241–261 (FNTCIAHICVFLQFYLLAFFS) form a helical membrane-spanning segment. Topologically, residues 262–276 (FFTHRFGSHISPYIH) are extracellular. Residues 277 to 297 (ILFSSIYLLVPPFLNPLVYGA) form a helical membrane-spanning segment. Residues 298–312 (KTTQIRIHVVKMFCS) are Cytoplasmic-facing.

The protein belongs to the G-protein coupled receptor 1 family.

It is found in the cell membrane. Odorant receptor. The sequence is that of Olfactory receptor 52A1 (OR52A1) from Homo sapiens (Human).